The chain runs to 228 residues: 7-cyano-7-deazaguanine synthase (228 aa).

7 to 17 (LSGGLDSAVNL) serves as a coordination point for ATP. Residues cysteine 192, cysteine 200, cysteine 203, and cysteine 206 each coordinate Zn(2+).

It belongs to the QueC family. In terms of assembly, homodimer. It depends on Zn(2+) as a cofactor.

The enzyme catalyses 7-carboxy-7-deazaguanine + NH4(+) + ATP = 7-cyano-7-deazaguanine + ADP + phosphate + H2O + H(+). It participates in purine metabolism; 7-cyano-7-deazaguanine biosynthesis. In terms of biological role, catalyzes the ATP-dependent conversion of 7-carboxy-7-deazaguanine (CDG) to 7-cyano-7-deazaguanine (preQ(0)). The protein is 7-cyano-7-deazaguanine synthase of Desulforamulus reducens (strain ATCC BAA-1160 / DSM 100696 / MI-1) (Desulfotomaculum reducens).